We begin with the raw amino-acid sequence, 129 residues long: Histone H3-like centromeric protein A (129 aa).

A compositionally biased stretch (basic residues) spans 1-14; that stretch reads MGPRRKPRTPRRRP. The tract at residues 1-30 is disordered; it reads MGPRRKPRTPRRRPSSPVPGPSRRSSRPGK. N,N,N-trimethylglycine is present on glycine 2. Phosphoserine occurs at positions 16, 22, and 57. The segment at 30-129 is H3-like; that stretch reads KRRKFLWLKE…RIRGIEGGLG (100 aa). The segment at 64-105 is CATD; sequence CGKFTRGVDLCWQAQALLALQEAAEAFLVHLFEDAYLLTLHA.

It belongs to the histone H3 family. As to quaternary structure, component of centromeric nucleosomes, where DNA is wrapped around a histone octamer core. The octamer contains two molecules each of H2A, H2B, CENPA and H4 assembled in one CENPA-H4 heterotetramer and two H2A-H2B heterodimers. CENPA modulates the DNA-binding characteristics of nucleosomes so that protruding DNA ends have higher flexibility than in nucleosomes containing conventional histone H3. Inhibits binding of histone H1 to nucleosomes, since histone H1 binds preferentially to rigid DNA linkers that protrude from nucleosomes. Nucleosomes containing CENPA also contain histone H2A variants such as MACROH2A and H2A.Z/H2AZ1. The CENPA-H4 heterotetramer is more compact and structurally more rigid than corresponding H3-H4 heterotetramers. Can assemble into nucleosomes that contain both CENPA and histone H3.3; these nucleosomes interact with a single CENPC chain. Heterotrimer composed of HJURP, CENPA and histone H4, where HJURP interacts with the dimer formed by CENPA and histone H4 and prevents tetramerization of CENPA and H4. Component of the CENPA-NAC complex, at least composed of CENPA, CENPC, CENPH, CENPM, CENPN, CENPT and CENPU. Interacts (via CATD domain) with HJURP; the interaction is direct and is required for its localization to centromeres. Interacts with CENPC, CENPN and CENPT; interaction is direct. Part of a centromere complex consisting of CENPA, CENPT and CENPW. Identified in centromere complexes containing histones H2A, H2B and H4, and at least CENPA, CENPB, CENPC, CENPT, CENPN, HJURP, SUPT16H, SSRP1 and RSF1. Can self-associate. The CENPA-H4 heterotetramer can bind DNA by itself (in vitro). Interacts with CDK1, PPP1CA and RBBP7. In terms of processing, trimethylated by NTMT1 at the N-terminal glycine after cleavage of Met-1. Methylation is low before incorporation into nucleosomes and increases with cell cycle progression, with the highest levels in mitotic nucleosomes. Phosphorylated by CDK1 at Ser-57 during early mitosis; this abolishes association with chromatin and centromeres, prevents interaction with HJURP and thereby prevents premature assembly of CENPA into centromeres. Dephosphorylated at Ser-57 by PPP1CA during late mitosis. Post-translationally, poly-ADP-ribosylated by PARP1.

It is found in the nucleus. It localises to the chromosome. The protein localises to the centromere. Its function is as follows. Histone H3-like nucleosomal protein that is specifically found in centromeric nucleosomes. Replaces conventional H3 in the nucleosome core of centromeric chromatin that serves as an assembly site for the inner kinetochore. The presence of CENPA subtly modifies the nucleosome structure and the way DNA is wrapped around the nucleosome and gives rise to protruding DNA ends that are less well-ordered and rigid compared to nucleosomes containing histone H3. May serve as an epigenetic mark that propagates centromere identity through replication and cell division. Required for recruitment and assembly of kinetochore proteins, and as a consequence required for progress through mitosis, chromosome segregation and cytokinesis. The protein is Histone H3-like centromeric protein A (CENPA) of Cricetulus griseus (Chinese hamster).